Here is a 379-residue protein sequence, read N- to C-terminus: Putative beta-glucosidase 6 (379 aa).

The signal sequence occupies residues 1 to 20 (MEKTFALITIFLAFAFSGKC). A beta-D-glucoside is bound by residues Q43, H141, and 186 to 187 (NE). Catalysis depends on E187, which acts as the Proton donor. A disulfide bridge links C206 with C213. An N-linked (GlcNAc...) asparagine glycan is attached at N217. An a beta-D-glucoside-binding site is contributed by Y329. An N-linked (GlcNAc...) asparagine glycan is attached at N362.

The protein belongs to the glycosyl hydrolase 1 family.

The enzyme catalyses Hydrolysis of terminal, non-reducing beta-D-glucosyl residues with release of beta-D-glucose.. The polypeptide is Putative beta-glucosidase 6 (Arabidopsis thaliana (Mouse-ear cress)).